The sequence spans 101 residues: Urease subunit beta (101 aa).

This sequence belongs to the urease beta subunit family. As to quaternary structure, heterotrimer of UreA (gamma), UreB (beta) and UreC (alpha) subunits. Three heterotrimers associate to form the active enzyme.

The protein localises to the cytoplasm. The enzyme catalyses urea + 2 H2O + H(+) = hydrogencarbonate + 2 NH4(+). The protein operates within nitrogen metabolism; urea degradation; CO(2) and NH(3) from urea (urease route): step 1/1. The chain is Urease subunit beta from Roseobacter denitrificans (strain ATCC 33942 / OCh 114) (Erythrobacter sp. (strain OCh 114)).